A 61-amino-acid polypeptide reads, in one-letter code: MFTLKKSLLLLFFLGVINVSLCEEERDADEEERRDDPEERDVEVEKRFFPLALLCKVFKKC.

A signal peptide spans 1 to 22 (MFTLKKSLLLLFFLGVINVSLC). A propeptide spanning residues 23-45 (EEERDADEEERRDDPEERDVEVE) is cleaved from the precursor. Residues Cys55 and Cys61 are joined by a disulfide bond.

The protein belongs to the frog skin active peptide (FSAP) family. Brevinin subfamily. In terms of tissue distribution, expressed by the skin glands.

It is found in the secreted. In terms of biological role, antimicrobial peptide. Has low activity against the Gram-positive bacterium S.aureus (MIC&gt;100 uM) and the Gram-negative bacterium E.coli (MIC=25 uM). Lacks hemolytic activity against human erythrocytes. The sequence is that of Japonicin-1CDYa from Rana dybowskii (Dybovsky's frog).